Reading from the N-terminus, the 424-residue chain is Phosphomethylpyrimidine synthase (424 aa).

Residues Asn-66, Met-95, Tyr-124, His-163, 185–187 (SRG), 226–229 (DGMR), and Glu-265 contribute to the substrate site. His-269 serves as a coordination point for Zn(2+). Phe-292 lines the substrate pocket. His-333 lines the Zn(2+) pocket. Cys-408, Cys-411, and Cys-415 together coordinate [4Fe-4S] cluster.

This sequence belongs to the ThiC family. [4Fe-4S] cluster is required as a cofactor.

It catalyses the reaction 5-amino-1-(5-phospho-beta-D-ribosyl)imidazole + S-adenosyl-L-methionine = 4-amino-2-methyl-5-(phosphooxymethyl)pyrimidine + CO + 5'-deoxyadenosine + formate + L-methionine + 3 H(+). It functions in the pathway cofactor biosynthesis; thiamine diphosphate biosynthesis. Catalyzes the synthesis of the hydroxymethylpyrimidine phosphate (HMP-P) moiety of thiamine from aminoimidazole ribotide (AIR) in a radical S-adenosyl-L-methionine (SAM)-dependent reaction. The sequence is that of Phosphomethylpyrimidine synthase from Thermotoga petrophila (strain ATCC BAA-488 / DSM 13995 / JCM 10881 / RKU-1).